The chain runs to 994 residues: Translocase of chloroplast 108, chloroplastic (994 aa).

Disordered stretches follow at residues 14 to 61 (KEAS…EDEP), 84 to 124 (TTDL…DPSV), and 152 to 287 (AVDG…DETR). Polar residues-rich tracts occupy residues 37 to 53 (GETT…ANES) and 84 to 98 (TTDL…TPSN). Positions 99 to 121 (AEKESPEATEVRIVEEGKLEKAD) are enriched in basic and acidic residues. Positions 166 to 197 (NDGDTDANTADEDNENDEDDVDEDEDEDDADM) are enriched in acidic residues. The segment covering 249-268 (ASDSPGRNTQRPNGALSTQI) has biased composition (polar residues). Residues 269–280 (TSTTDESASSDA) are compositionally biased toward low complexity. One can recognise an AIG1-type G domain in the interval 360–589 (DFACTILVLG…KLQETTAPGR (230 aa)). Residues 369-376 (GKTGVGKS) are G1. 372–377 (GVGKSS) contacts GTP. Ser-376 is a binding site for Mg(2+). Residues 395-399 (PSTNK) form a G2 region. Residues 416–419 (DTPG) form a G3 region. Residues 488–491 (THAS) are G4. Residues His-489 and 537-538 (EN) contribute to the GTP site. The tract at residues 537-539 (ENH) is G5. 2 disordered regions span residues 616–659 (LPDE…EDLT) and 691–716 (EAKK…EAGN). Over residues 620–643 (QAGESDESDDDEEEEDSDADDYDE) the composition is skewed to acidic residues. Basic and acidic residues predominate over residues 650–659 (LSKEELEDLT). Over residues 705-714 (AEAEEAEDEA) the composition is skewed to acidic residues. Residues 969-989 (MVLIGIVPILRSLINCRFGFG) traverse the membrane as a helical segment.

It belongs to the TRAFAC class TrmE-Era-EngA-EngB-Septin-like GTPase superfamily. AIG1/Toc34/Toc159-like paraseptin GTPase family. TOC159 subfamily. Part of the TOC core complex. Requires Mg(2+) as cofactor.

Its subcellular location is the plastid. It localises to the chloroplast outer membrane. Its function is as follows. GTPase involved in protein precursor import into chloroplasts. Seems to recognize chloroplast-destined precursor proteins and regulate their presentation to the translocation channel through GTP hydrolysis. Probably specialized in the import of nuclear encoded non-photosynthetic preproteins from the cytoplasm to the chloroplast. The sequence is that of Translocase of chloroplast 108, chloroplastic from Physcomitrium patens (Spreading-leaved earth moss).